Consider the following 1502-residue polypeptide: Leucine-rich repeat-containing protein 9 (1502 aa).

LRR repeat units follow at residues phenylalanine 53 to lysine 79, cysteine 97 to leucine 119, leucine 120 to methionine 141, glutamine 142 to asparagine 164, glutamine 166 to arginine 188, leucine 224 to lysine 247, glutamate 296 to glutamate 320, tyrosine 699 to leucine 721, asparagine 722 to threonine 744, leucine 746 to glycine 764, leucine 765 to lysine 790, alanine 792 to aspartate 814, leucine 822 to glutamine 849, tyrosine 894 to leucine 916, valine 917 to cysteine 938, valine 939 to leucine 960, threonine 961 to serine 983, serine 985 to leucine 1009, glutamate 1011 to glycine 1030, leucine 1031 to leucine 1053, phenylalanine 1100 to histidine 1123, phenylalanine 1124 to leucine 1146, proline 1147 to serine 1170, methionine 1209 to arginine 1232, arginine 1234 to leucine 1255, glutamine 1256 to lysine 1278, asparagine 1280 to leucine 1301, leucine 1302 to valine 1325, and proline 1327 to valine 1351. Residues lysine 317 to aspartate 342 are disordered. The span at threonine 1479–glutamate 1496 shows a compositional bias: polar residues. Residues threonine 1479–valine 1502 are disordered.

This Xenopus tropicalis (Western clawed frog) protein is Leucine-rich repeat-containing protein 9 (lrrc9).